We begin with the raw amino-acid sequence, 131 residues long: MYNKVIMIGRLTAKPEMVKTPTDKSVTRATVAVNRRFKGSNGEREADFINVVMWGRLAETLASYGTKGSLISVDGELRTRKYEKDGQTHYITEVLASSFQLLESRSQRAMRENNISGDLSDLVLEEEELPF.

The SSB domain occupies 1-103 (MYNKVIMIGR…VLASSFQLLE (103 aa)). Residues 126–131 (EEELPF) carry the Important for interaction with partner proteins motif.

In terms of assembly, homotetramer.

Plays an important role in DNA replication, recombination and repair. Binds to ssDNA and to an array of partner proteins to recruit them to their sites of action during DNA metabolism. The protein is Single-stranded DNA-binding protein 2 (ssb2) of Streptococcus agalactiae serotype III (strain NEM316).